The sequence spans 194 residues: Recombination protein RecR (194 aa).

The segment at 53–68 (CEICFNLDVTSPCSIC) adopts a C4-type zinc-finger fold. The 96-residue stretch at 76-171 (SLLCIVEELG…KVTRLACGIP (96 aa)) folds into the Toprim domain.

This sequence belongs to the RecR family.

Its function is as follows. May play a role in DNA repair. It seems to be involved in an RecBC-independent recombinational process of DNA repair. It may act with RecF and RecO. In Anaplasma phagocytophilum (strain HZ), this protein is Recombination protein RecR.